Reading from the N-terminus, the 401-residue chain is cAMP-dependent protein kinase type II-alpha regulatory subunit (401 aa).

N-acetylserine is present on Ser2. A dimerization and phosphorylation region spans residues 2 to 135; the sequence is SHIQIPPGLT…RLQEACKDIL (134 aa). Phosphoserine is present on residues Ser47, Ser74, Ser76, and Ser96. Residues 61–83 are disordered; it reads ESSAVPVIEEDGESDSDSEDADL. Residues 68–83 are compositionally biased toward acidic residues; sequence IEEDGESDSDSEDADL. Residues 136 to 257, Glu205, Arg214, 258 to 401, Glu335, and Arg344 each bind 3',5'-cyclic AMP; these read LFKN…ESVP and LFKS…DPGQ. Thr212 bears the Phosphothreonine; by PDPK1 mark. Phosphoserine occurs at positions 347 and 392.

The protein belongs to the cAMP-dependent kinase regulatory chain family. In terms of assembly, the inactive form of the enzyme is composed of two regulatory chains and two catalytic chains. Activation by cAMP produces two active catalytic monomers and a regulatory dimer that binds four cAMP molecules. Interacts with AKAP4. Interacts with CBFA2T3. Interacts with the phosphorylated form of PJA2. Interacts with MYRIP. This interaction may link PKA to components of the exocytosis machinery, thus facilitating exocytosis, including insulin release. Forms a complex composed of PRKAR2A, GSK3B and GSKIP through GSKIP interaction; facilitates PKA-induced phosphorylation and regulates GSK3B activity. Interacts with ADCY8; inhibits adenylate cyclase activity through PKA phosphorylation. In terms of processing, phosphorylated by the activated catalytic chain. Four types of regulatory chains are found: I-alpha, I-beta, II-alpha, and II-beta. Their expression varies among tissues and is in some cases constitutive and in others inducible.

It is found in the cytoplasm. Its subcellular location is the cell membrane. Regulatory subunit of the cAMP-dependent protein kinases involved in cAMP signaling in cells. Type II regulatory chains mediate membrane association by binding to anchoring proteins, including the MAP2 kinase. The polypeptide is cAMP-dependent protein kinase type II-alpha regulatory subunit (Prkar2a) (Mus musculus (Mouse)).